The following is a 51-amino-acid chain: ATP synthase protein 8 (51 aa).

Residues 7-27 (LNWAMMTIMFSLSLLVSMIIL) traverse the membrane as a helical segment.

It belongs to the ATPase protein 8 family. As to quaternary structure, F-type ATPases have 2 components, CF(1) - the catalytic core - and CF(0) - the membrane proton channel.

It is found in the mitochondrion membrane. Its function is as follows. Mitochondrial membrane ATP synthase (F(1)F(0) ATP synthase or Complex V) produces ATP from ADP in the presence of a proton gradient across the membrane which is generated by electron transport complexes of the respiratory chain. F-type ATPases consist of two structural domains, F(1) - containing the extramembraneous catalytic core and F(0) - containing the membrane proton channel, linked together by a central stalk and a peripheral stalk. During catalysis, ATP synthesis in the catalytic domain of F(1) is coupled via a rotary mechanism of the central stalk subunits to proton translocation. Part of the complex F(0) domain. Minor subunit located with subunit a in the membrane. In Limulus polyphemus (Atlantic horseshoe crab), this protein is ATP synthase protein 8 (MT-ATP8).